A 94-amino-acid polypeptide reads, in one-letter code: Copper resistance protein K (94 aa).

The N-terminal stretch at 1-20 (MKQKLMVGAFIAAVSLSAAA) is a signal peptide.

As to quaternary structure, monomer in the copper-bound form. Homodimer as apoprotein. Dissociates into monomers upon copper binding.

It is found in the periplasm. Functionally, involved in resistance to copper. Can bind up to 2 copper ions. Has higher affinity for Cu(+) than for Cu(2+). The polypeptide is Copper resistance protein K (copK) (Cupriavidus metallidurans (strain ATCC 43123 / DSM 2839 / NBRC 102507 / CH34) (Ralstonia metallidurans)).